The sequence spans 428 residues: Histone-lysine N-methyltransferase SMYD3 (428 aa).

M1 bears the N-acetylmethionine mark. The SET domain maps to L4–L240. Residue R14–N16 participates in S-adenosyl-L-methionine binding. A Phosphothreonine modification is found at T22. 8 residues coordinate Zn(2+): C49, C52, C62, C65, C71, C75, H83, and C87. The MYND-type zinc finger occupies C49–C87. S-adenosyl-L-methionine-binding positions include Y124, N132, N181, N205–H206, Y239, and F259. Positions D272–S428 are C-terminal domain; essential for histone methyltransferase activity, nuclear localization and mediates interaction with HSP90AA1.

The protein belongs to the class V-like SAM-binding methyltransferase superfamily. Histone-lysine methyltransferase family. Interacts with HSPCA. Interacts with HELZ. Interacts with POLR2A; the interaction may be indirect and may be mediated by HELZ. Interacts with HSP90AA1; this interaction enhances SMYD3 histone-lysine N-methyltransferase. As to expression, expressed in skeletal muscles and testis. Overexpressed in a majority of colorectal and hepatocellular carcinomas.

It is found in the cytoplasm. The protein localises to the nucleus. The catalysed reaction is L-lysyl(4)-[histone H3] + 3 S-adenosyl-L-methionine = N(6),N(6),N(6)-trimethyl-L-lysyl(4)-[histone H3] + 3 S-adenosyl-L-homocysteine + 3 H(+). Histone methyltransferase activity strongly stimulated by HSPCA. In terms of biological role, histone methyltransferase. Specifically methylates 'Lys-4' of histone H3, inducing di- and tri-methylation, but not monomethylation. Also methylates 'Lys-5' of histone H4. Plays an important role in transcriptional activation as a member of an RNA polymerase complex. Binds DNA containing 5'-CCCTCC-3' or 5'-GAGGGG-3' sequences. This is Histone-lysine N-methyltransferase SMYD3 (SMYD3) from Homo sapiens (Human).